The following is a 407-amino-acid chain: Serine hydroxymethyltransferase (407 aa).

(6S)-5,6,7,8-tetrahydrofolate is bound by residues L117 and G121 to L123. N6-(pyridoxal phosphate)lysine is present on K226. E242 contributes to the (6S)-5,6,7,8-tetrahydrofolate binding site.

Belongs to the SHMT family. As to quaternary structure, homodimer. Pyridoxal 5'-phosphate serves as cofactor.

The protein localises to the cytoplasm. It carries out the reaction (6R)-5,10-methylene-5,6,7,8-tetrahydrofolate + glycine + H2O = (6S)-5,6,7,8-tetrahydrofolate + L-serine. It participates in one-carbon metabolism; tetrahydrofolate interconversion. Its pathway is amino-acid biosynthesis; glycine biosynthesis; glycine from L-serine: step 1/1. Its function is as follows. Catalyzes the reversible interconversion of serine and glycine with tetrahydrofolate (THF) serving as the one-carbon carrier. This reaction serves as the major source of one-carbon groups required for the biosynthesis of purines, thymidylate, methionine, and other important biomolecules. Also exhibits THF-independent aldolase activity toward beta-hydroxyamino acids, producing glycine and aldehydes, via a retro-aldol mechanism. The chain is Serine hydroxymethyltransferase from Thermus thermophilus (strain ATCC BAA-163 / DSM 7039 / HB27).